Consider the following 272-residue polypeptide: Glutamate racemase (272 aa).

Substrate contacts are provided by residues 10–11 (DS) and 42–43 (YG). Cysteine 74 functions as the Proton donor/acceptor in the catalytic mechanism. 75 to 76 (NT) contacts substrate. Cysteine 185 functions as the Proton donor/acceptor in the catalytic mechanism. 186–187 (TH) serves as a coordination point for substrate.

It belongs to the aspartate/glutamate racemases family.

The catalysed reaction is L-glutamate = D-glutamate. It participates in cell wall biogenesis; peptidoglycan biosynthesis. Its function is as follows. Provides the (R)-glutamate required for cell wall biosynthesis. This chain is Glutamate racemase, found in Bacillus pumilus (strain SAFR-032).